Reading from the N-terminus, the 1547-residue chain is MADGSRLPESATSTTMETNTNEHAKVLSPDAETVPSSSMTATSSELSLDGRWGERDQGEPVSRRGAMEDFEEMRRELTQLSLRRTRSVGKDAHRLRSRASGRASQVHDEEKAIDEEDSTIDGDGDGYQGGFDLGEFLMGGHLERRTTTGEPAKKVGVLFKHLTVKGVETGASFVRTLPDAVVGTFGPDLYRIVCSFIPQLRFGKQPPVRELLHDFTGLVREGEMMLVLGRPGAGCSTFLKTIANDRGAFAGVEGEVRYGGLSAEEQLKHFRGEVNYNPEDDQHFPSLTVWQTLKFSLINKTKKHDKNSIPIIIDALLKMFGITHTKNTLVGNEYVRGVSGGERKRVSIAETLATKSSVVCWDNSTRGLDASTALDYAKSLRIMTDVSKRTTFVTLYQAGESIYELMDKVLVIDSGRMLYQGPANKAREYFVNLGFHCPEKSTTADFLTSICDPNARQFQPGREASTPKTPEELEAVFRNSETYKTICDEVASYEKKLQDTDQEDTRRFQKTVAQSKSRTVSKKSSYTVSFARQVLACVQREFWLLWGDKTSLYTKYFIIISNALIVSSLFYGESLDTSGAFSRGGALFFSILFLGWLQLTELMPAVTGRGIVARHKEYAFYRPSAVSIARVVMDFPAIFCMVVPFTIIMYFMTGLDVTASKFFIYFLFVYTTTFSITSLYRMFAALSPTIDDAVRFSGIALNILVIFVGYVIPKQGLIDGSIWFGWLFYVNPIAYSYEAVLTNEFSDRIMDCAPSQLVPQGPGVDPRYQGCALPGSELGRRGVSGSRYLEESFQFTRSHLWRNFGVVIAFTVLYLIVTVLAAEFLSFVGGGGGALVFKRSKRAKKLATQTTQGNDEEKVQDVGDKAALSRGEAMSASNGESFKRISSSDRIFTWSNVEYTVPYGNGTRKLLNGVNGYAKPGVMIALMGASGAGKTTLLNTLAQRQKMGVVTGDFLVDGRPLGADFQRGTGFCEQMDLHDNTSTIREALEFSALLRQDRNVSKQEKLDYVDQIIDLLELNDIQDAIIGSLNVEQKKRVTIGVELAAKPSLLLFLDEPTSGLDSQAAFSIVRFLKKLSLAGQAILCTIHQPSSMLIQQFDMILALNPGGNTFYFGPVGHDGGDVIKYFADRGVVCPPSKNVAEFILETAAKATTTKDGKKIDWNEEWRNSEQNQRVLDEIQQIREERSKIPVTETGSPYEFAASTMTQTLLLTKRIFRQYWRDPSYYYGKLFVSVIIGIFNGFTFWMLGNSIANMQDRMFSIFLIIMIPPVVLNSIVPKFYINRALWEAREYPSRIYGWFAFCTANIVCEIPMAIVSSLIYWLLWYYPVGFPTDSSTAGYVFLMSMLFFLFMSSWGQWICAFAPSFTVISNVLPFFFVMCNLFNGIVRPYRDYPVFWKYWMYYVNPVTWWLRGVISSIFPTVQIDCSPSETTHFNPPPGQTCANYAGNFITNIAKNGYLLNPDASADCQYCPYSNGAEYMATLNVHDGDKWRCFGIFLAFVIINWLLVYFFIYTVRVRGWSFGMGYLFGGMGLVIDKVKGVFKRKSEKA.

Disordered stretches follow at residues 1–66 (MADG…RRGA) and 85–123 (TRSV…IDGD). A compositionally biased stretch (polar residues) spans 10-19 (SATSTTMETN). The span at 36 to 47 (SSSMTATSSELS) shows a compositional bias: low complexity. The span at 51–66 (RWGERDQGEPVSRRGA) shows a compositional bias: basic and acidic residues. Over residues 111 to 123 (KAIDEEDSTIDGD) the composition is skewed to acidic residues. Residues 197–439 (IPQLRFGKQP…FVNLGFHCPE (243 aa)) form the ABC transporter 1 domain. N-linked (GlcNAc...) asparagine glycosylation is found at N299 and N363. 7 helical membrane-spanning segments follow: residues 552–572 (LYTK…LFYG), 586–606 (ALFF…MPAV), 635–655 (FPAI…MTGL), 657–677 (VTAS…FSIT), 698–718 (GIAL…QGLI), 722–742 (IWFG…AVLT), and 804–824 (FGVV…AAEF). The 239-residue stretch at 892–1130 (FTWSNVEYTV…DVIKYFADRG (239 aa)) folds into the ABC transporter 2 domain. N905 carries an N-linked (GlcNAc...) asparagine glycan. 928 to 935 (GASGAGKT) lines the ATP pocket. N-linked (GlcNAc...) asparagine glycosylation is found at N980 and N999. 8 helical membrane-spanning segments follow: residues 1230–1250 (FVSV…GNSI), 1260–1280 (IFLI…KFYI), 1309–1329 (IPMA…PVGF), 1334–1354 (STAG…SSWG), 1356–1376 (WICA…FFFV), 1397–1417 (YWMY…SSIF), 1491–1511 (CFGI…FFIY), and 1520–1540 (FGMG…KGVF).

The protein belongs to the ABC transporter superfamily. ABCG family. PDR (TC 3.A.1.205) subfamily.

It is found in the cell membrane. It carries out the reaction voriconazole(in) + ATP + H2O = voriconazole(out) + ADP + phosphate + H(+). The enzyme catalyses fluconazole(in) + ATP + H2O = fluconazole(out) + ADP + phosphate + H(+). In terms of biological role, pleiotropic ABC efflux transporter involved in the basal level of azole susceptibility. Confers resistance to fluconazole and voriconazole. This chain is ABC multidrug transporter atrF, found in Aspergillus fumigatus (strain ATCC MYA-4609 / CBS 101355 / FGSC A1100 / Af293) (Neosartorya fumigata).